The following is a 349-amino-acid chain: Cobalt-precorrin-5B C(1)-methyltransferase (349 aa).

This sequence belongs to the CbiD family.

The catalysed reaction is Co-precorrin-5B + S-adenosyl-L-methionine = Co-precorrin-6A + S-adenosyl-L-homocysteine. Its pathway is cofactor biosynthesis; adenosylcobalamin biosynthesis; cob(II)yrinate a,c-diamide from sirohydrochlorin (anaerobic route): step 6/10. Functionally, catalyzes the methylation of C-1 in cobalt-precorrin-5B to form cobalt-precorrin-6A. This Saccharolobus islandicus (strain L.S.2.15 / Lassen #1) (Sulfolobus islandicus) protein is Cobalt-precorrin-5B C(1)-methyltransferase.